Here is a 428-residue protein sequence, read N- to C-terminus: MSAFIVLGAQWGDEGKGKMTDYLAENADVVVRFQGGNNAGHTVVVGEKEYKLHLIPSGILYNDKLNVIGNGVVLDPKALFEEINYLESLGVEITPDRLIISDRAHVIMPYHRILDGIKERARGNKDIGTTGKGIGPSYTDKMERSGIRVCDLIHKEVFEENLKETLEVKNKIITEVFGGEALDYNEIYNEYLGYAEKLRPFVKDISVIVNKKIKDGKEVLFEGAQGTLLDIDYGTYPYVTSSSTIAGGVCIGAGVGPTAITNAVGIAKAYTTRVGKGPFPTELLDRTGDWVREKGHEFGVTTGRARRCGWLDLVILKTSARISGLTSFAVTKIDTLAGLDTLKVCTGYRLNGEIIDYVPASLEDLAKCKPIYEEFQGWDDSIANARCYKDLPENAIKYLKKIEDFTETKVSIVSVGPKRDQTMMISEI.

GTP contacts are provided by residues 12–18 and 40–42; these read GDEGKGK and GHT. Aspartate 13 serves as the catalytic Proton acceptor. Mg(2+)-binding residues include aspartate 13 and glycine 40. IMP-binding positions include 13–16, 38–41, threonine 130, arginine 144, glutamine 225, threonine 240, and arginine 304; these read DEGK and NAGH. Catalysis depends on histidine 41, which acts as the Proton donor. 300 to 306 is a substrate binding site; that stretch reads VTTGRAR. Residues arginine 306, 332 to 334, and 414 to 416 each bind GTP; these read KID and SVG.

Belongs to the adenylosuccinate synthetase family. Homodimer. Mg(2+) serves as cofactor.

It localises to the cytoplasm. The catalysed reaction is IMP + L-aspartate + GTP = N(6)-(1,2-dicarboxyethyl)-AMP + GDP + phosphate + 2 H(+). The protein operates within purine metabolism; AMP biosynthesis via de novo pathway; AMP from IMP: step 1/2. Functionally, plays an important role in the de novo pathway of purine nucleotide biosynthesis. Catalyzes the first committed step in the biosynthesis of AMP from IMP. This chain is Adenylosuccinate synthetase, found in Clostridium botulinum (strain Loch Maree / Type A3).